Reading from the N-terminus, the 337-residue chain is Ferrochelatase (337 aa).

2 residues coordinate Fe cation: His-189 and Glu-293.

Belongs to the ferrochelatase family.

The protein resides in the cytoplasm. The catalysed reaction is heme b + 2 H(+) = protoporphyrin IX + Fe(2+). The protein operates within porphyrin-containing compound metabolism; protoheme biosynthesis; protoheme from protoporphyrin-IX: step 1/1. Functionally, catalyzes the ferrous insertion into protoporphyrin IX. In Pseudomonas entomophila (strain L48), this protein is Ferrochelatase.